The chain runs to 120 residues: Protein VraC (120 aa).

In Staphylococcus epidermidis (strain ATCC 12228 / FDA PCI 1200), this protein is Protein VraC.